Reading from the N-terminus, the 414-residue chain is TAR DNA-binding protein 43 (414 aa).

2 RRM domains span residues 104–200 and 191–262; these read SDLI…RCTE and RKVF…NAEP. Residues 261 to 274 show a composition bias toward basic and acidic residues; the sequence is EPKHNSNRQLERGG. Disordered stretches follow at residues 261 to 303 and 341 to 373; these read EPKH…GNNQ and ASQQ…GNNS. The span at 275–303 shows a compositional bias: gly residues; that stretch reads RFGGNPGGFGNQGGFGNSRGGGGGLGNNQ. A compositionally biased stretch (low complexity) spans 342–373; it reads SQQNQSGPSGNNQPQGNMQREQNQGFSSGNNS.

Homodimer.

It localises to the nucleus. The protein resides in the cytoplasm. It is found in the stress granule. Its subcellular location is the mitochondrion. Probably involved in transcriptional repression. May play a role in the maintenance of the circadian clock periodicity. The sequence is that of TAR DNA-binding protein 43 (TARDBP) from Gallus gallus (Chicken).